A 934-amino-acid chain; its full sequence is 2-oxoglutarate dehydrogenase E1 component (934 aa).

A compositionally biased stretch (basic and acidic residues) spans 515-537 (RAAQDKIDKSDKMDNPDMERPES). The interval 515 to 544 (RAAQDKIDKSDKMDNPDMERPESLQEPLQS) is disordered.

It belongs to the alpha-ketoglutarate dehydrogenase family. Homodimer. Part of the 2-oxoglutarate dehydrogenase (OGDH) complex composed of E1 (2-oxoglutarate dehydrogenase), E2 (dihydrolipoamide succinyltransferase) and E3 (dihydrolipoamide dehydrogenase); the complex contains multiple copies of the three enzymatic components (E1, E2 and E3). Requires thiamine diphosphate as cofactor.

The catalysed reaction is N(6)-[(R)-lipoyl]-L-lysyl-[protein] + 2-oxoglutarate + H(+) = N(6)-[(R)-S(8)-succinyldihydrolipoyl]-L-lysyl-[protein] + CO2. Its function is as follows. E1 component of the 2-oxoglutarate dehydrogenase (OGDH) complex which catalyzes the decarboxylation of 2-oxoglutarate, the first step in the conversion of 2-oxoglutarate to succinyl-CoA and CO(2). The polypeptide is 2-oxoglutarate dehydrogenase E1 component (Staphylococcus haemolyticus (strain JCSC1435)).